Here is a 2059-residue protein sequence, read N- to C-terminus: DNA polymerase theta (2059 aa).

Residues Asp-25–Val-45 are disordered. Residues Gln-30–Val-45 are compositionally biased toward polar residues. The Helicase ATP-binding domain occupies Pro-243–Asn-416. Ala-256–Thr-263 serves as a coordination point for ATP. Positions Asp-357 to His-360 match the DEAH box motif. The region spanning Cys-464–Ile-666 is the Helicase C-terminal domain. 4 disordered regions span residues Pro-1052–Arg-1073, Pro-1168–Gly-1190, Gln-1204–Val-1274, and Pro-1330–Ser-1372. The span at Glu-1062 to Asn-1071 shows a compositional bias: polar residues. Residues Lys-1213 to Val-1274 are compositionally biased toward polar residues. Residues Arg-1355 to Asn-1365 show a composition bias toward basic and acidic residues.

It belongs to the DNA polymerase type-A family. Requires Mg(2+) as cofactor. In terms of processing, in adult males, cleaved to produce a 100 kDa form. As to expression, expressed in ovaries (at protein level).

It is found in the nucleus. It catalyses the reaction DNA(n) + a 2'-deoxyribonucleoside 5'-triphosphate = DNA(n+1) + diphosphate. Resistant to aphidicolin, but sensitive to dideoxythymindine triphosphate (ddTTP) and N-ethyl malemide (NEM). Its function is as follows. Multifunctional protein with both DNA polymerase and ATPase activities. Might have 3' to 5' exonuclease activity. Plays a role in different DNA repair pathways such as DNA strand cross-link repair and microhomology-mediated end-joining (MMEJ), an alternative non-homologous end-joining (NHEJ) machinery triggered in response to double-strand breaks. MMEJ is an error-prone repair pathway that produces deletions of sequences from the strand being repaired and promotes genomic rearrangements, such as telomere fusions. Utilizes short microhomologies present in partially and fully single-stranded DNA (ssDNA) as primers for DNA synthesis. Prefers poly(dA)/oligo(dT) as a template-primer. The ATPase activity is necessary during interstrand cross-link (ICL) repair and has a critical role in generating templated insertions during MMEJ. Necessary for processing DNA damage induced by oxygen and N-ethylation. In follicle cells, contributes to double-strand break repair at physiological rereplication forks necessary for survival of fertilized eggs. The sequence is that of DNA polymerase theta from Drosophila melanogaster (Fruit fly).